The chain runs to 632 residues: Extracellular metalloproteinase 2 (632 aa).

The N-terminal stretch at 1–19 is a signal peptide; that stretch reads MHGLLLAGLAAALPLGVAG. A propeptide spanning residues 20–244 is cleaved from the precursor; that stretch reads LPARQQSGLS…VHNVVDYVAS (225 aa). A glycan (N-linked (GlcNAc...) asparagine) is linked at asparagine 270. Histidine 429 lines the Zn(2+) pocket. The active site involves glutamate 430. Histidine 433 serves as a coordination point for Zn(2+).

This sequence belongs to the peptidase M36 family. Requires Zn(2+) as cofactor.

The protein localises to the secreted. Its function is as follows. Secreted metalloproteinase probably acting as a virulence factor. This Arthroderma benhamiae (Trichophyton mentagrophytes) protein is Extracellular metalloproteinase 2 (MEP2).